The primary structure comprises 116 residues: Iron-sulfur cluster insertion protein ErpA (116 aa).

Iron-sulfur cluster contacts are provided by cysteine 44, cysteine 108, and cysteine 110.

It belongs to the HesB/IscA family. Homodimer. Requires iron-sulfur cluster as cofactor.

In terms of biological role, required for insertion of 4Fe-4S clusters for at least IspG. The sequence is that of Iron-sulfur cluster insertion protein ErpA from Francisella tularensis subsp. mediasiatica (strain FSC147).